The primary structure comprises 249 residues: Phosphate import ATP-binding protein PstB 1 (249 aa).

An ABC transporter domain is found at 4–244; sequence FNIENLDLFY…PKDDRTQGYV (241 aa). An ATP-binding site is contributed by 36-43; the sequence is GPSGCGKS.

Belongs to the ABC transporter superfamily. Phosphate importer (TC 3.A.1.7) family. In terms of assembly, the complex is composed of two ATP-binding proteins (PstB), two transmembrane proteins (PstC and PstA) and a solute-binding protein (PstS).

It localises to the cell inner membrane. The catalysed reaction is phosphate(out) + ATP + H2O = ADP + 2 phosphate(in) + H(+). Functionally, part of the ABC transporter complex PstSACB involved in phosphate import. Responsible for energy coupling to the transport system. The protein is Phosphate import ATP-binding protein PstB 1 of Aliivibrio fischeri (strain ATCC 700601 / ES114) (Vibrio fischeri).